Here is a 370-residue protein sequence, read N- to C-terminus: Flagellar P-ring protein (370 aa).

An N-terminal signal peptide occupies residues 1–21 (MKLLLFILMISSIIIVPVGQA).

Belongs to the FlgI family. As to quaternary structure, the basal body constitutes a major portion of the flagellar organelle and consists of four rings (L,P,S, and M) mounted on a central rod.

Its subcellular location is the periplasm. It localises to the bacterial flagellum basal body. Its function is as follows. Assembles around the rod to form the L-ring and probably protects the motor/basal body from shearing forces during rotation. This Pseudoalteromonas atlantica (strain T6c / ATCC BAA-1087) protein is Flagellar P-ring protein.